A 324-amino-acid polypeptide reads, in one-letter code: tRNA-modifying protein YgfZ (324 aa).

Tryptophan 184 provides a ligand contact to folate.

Belongs to the tRNA-modifying YgfZ family.

It localises to the cytoplasm. In terms of biological role, folate-binding protein involved in regulating the level of ATP-DnaA and in the modification of some tRNAs. It is probably a key factor in regulatory networks that act via tRNA modification, such as initiation of chromosomal replication. The sequence is that of tRNA-modifying protein YgfZ from Vibrio vulnificus (strain CMCP6).